The sequence spans 63 residues: KDGYPMDSKGCKISCLISDTFCDTECKMKKAKSGYCYSRGLACWCEGLPENVEVWDKATNKCG.

One can recognise an LCN-type CS-alpha/beta domain in the interval 1-63 (KDGYPMDSKG…VWDKATNKCG (63 aa)). Cystine bridges form between C11–C62, C15–C36, C22–C43, and C26–C45. Glycine amide is present on G63.

As to expression, expressed by the venom gland.

It localises to the secreted. In terms of biological role, beta toxins bind voltage-independently at site-4 of sodium channels (Nav) and shift the voltage of activation toward more negative potentials thereby affecting sodium channel activation and promoting spontaneous and repetitive firing. Is highly active on insects, since it provokes paralysis and death when injected into crickets. The protein is Ct-IT2 of Centruroides tecomanus (Scorpion).